The chain runs to 423 residues: Galactosylceramide sulfotransferase (423 aa).

Topologically, residues M1–K14 are cytoplasmic. A helical; Signal-anchor for type II membrane protein transmembrane segment spans residues G15–P35. Residues P36 to W423 are Lumenal-facing. Residues G48 to G70 are disordered. 3 N-linked (GlcNAc...) asparagine glycosylation sites follow: N66, N156, and N312.

This sequence belongs to the galactose-3-O-sulfotransferase family.

The protein localises to the golgi apparatus membrane. It carries out the reaction a beta-D-galactosyl-(1&lt;-&gt;1')-N-acylsphing-4-enine + 3'-phosphoadenylyl sulfate = an N-acyl-1-beta-D-(3-O-sulfo)-galactosyl-sphing-4-enine + adenosine 3',5'-bisphosphate + H(+). It catalyses the reaction a 1-O-alkyl-2-acyl-3-O-(beta-D-galactosyl)-sn-glycerol + 3'-phosphoadenylyl sulfate = a 1-O-alkyl-2-acyl-3-(beta-D-3-sulfogalactosyl)-sn-glycerol + adenosine 3',5'-bisphosphate + H(+). The catalysed reaction is a beta-D-Gal-(1&lt;-&gt;1')-ceramide + 3'-phosphoadenylyl sulfate = 1-(3-O-sulfo-beta-D-galactosyl)-ceramide + adenosine 3',5'-bisphosphate + H(+). The enzyme catalyses a 1,2-diacyl-3-O-(beta-D-galactosyl)-sn-glycerol + 3'-phosphoadenylyl sulfate = 1,2-diacyl-3-(3-O-sulfo-beta-D-galactosyl)-sn-glycerol + adenosine 3',5'-bisphosphate + H(+). It carries out the reaction a beta-D-Gal-(1-&gt;4)-beta-D-Glc-(1&lt;-&gt;1)-Cer(d18:1(4E)) + 3'-phosphoadenylyl sulfate = beta-D-3-sulfogalactosyl-(1-&gt;4)-beta-D-glucosyl-(1&lt;-&gt;1')-N-acylsphing-4-enine + adenosine 3',5'-bisphosphate + H(+). It participates in lipid metabolism; sphingolipid metabolism. Functionally, catalyzes the transfer of a sulfate group to position 3 of non-reducing beta-galactosyl residues in glycerolipids and sphingolipids, therefore participates in the biosynthesis of sulfoglycolipids. Catalyzes the synthesis of galactosylceramide sulfate (sulfatide), a major lipid component of the myelin sheath and of monogalactosylalkylacylglycerol sulfate (seminolipid), present in spermatocytes. Seems to prefer beta-glycosides at the non-reducing termini of sugar chains attached to a lipid moiety. Also acts on lactosylceramide, galactosyl 1-alkyl-2-sn-glycerol and galactosyl diacylglycerol (in vitro). This chain is Galactosylceramide sulfotransferase, found in Bos taurus (Bovine).